The sequence spans 30 residues: Hementerin (30 aa).

Requires Ca(2+) as cofactor.

The protein resides in the secreted. Its activity is regulated as follows. Fibrino(geno)lytic activity inhibited by EDTA but not by PMSF, E-64, 6-AHA and aprotinin. Its function is as follows. Cleaves fibrinogen Aalpha (FGA), gamma (FGG) and Bbeta (FGB) chains. Degrades cross-linked fibrin. Has no amidolytic, plasminogenolytic or caseinolytic activity. Inhibits platelet aggregation induced by collagen (IC(50)=7.5ug/ml) and various other agonists, presumably via activation of a nitridergic pathway. Inhibition is accompanied by reduced ATP release from and surface expression of SELP and CD63 on platelets as well as increased intracellular levels of Ca(2+), cGMP and nitric oxide synthase activity. The chain is Hementerin from Haementeria depressa (Leech).